A 108-amino-acid polypeptide reads, in one-letter code: Zinc metalloproteinase/disintegrin (108 aa).

In terms of domain architecture, Peptidase M12B spans 1 to 19; that stretch reads NEYQTYLTDRNPQCILNEP. The propeptide occupies 20–35; the sequence is LRTDTVSTPVSGNELL. Positions 27 to 108 constitute a Disintegrin domain; that stretch reads TPVSGNELLE…ADCPRNGFYG (82 aa). 6 cysteine pairs are disulfide-bonded: Cys41-Cys56, Cys43-Cys51, Cys50-Cys73, Cys64-Cys70, Cys69-Cys94, and Cys82-Cys101. Residues 86–88 carry the Cell attachment site; atypical (KGD) motif; sequence KGD.

It belongs to the venom metalloproteinase (M12B) family. P-II subfamily. P-IIa sub-subfamily. Monomeric (disintegrin). It depends on Zn(2+) as a cofactor. In terms of tissue distribution, expressed by the venom gland.

It localises to the secreted. In terms of biological role, impairs hemostasis in the envenomed animal. Its function is as follows. Inhibits platelet aggregation induced by ADP, thrombin, platelet-activating factor and collagen. Acts by inhibiting fibrinogen interaction with platelet receptors GPIIb/GPIIIa (ITGA2B/ITGB3). The polypeptide is Zinc metalloproteinase/disintegrin (Gloydius brevicauda (Korean slamosa snake)).